The sequence spans 247 residues: Chaperone protein NfaE (247 aa).

The first 29 residues, 1–29 (MKMRAVAVFTGMLTGVLSVTGLLSAGAYA), serve as a signal peptide directing secretion. Residues 106–125 (GQQSSRRRSVSTGGEFPSDR) are disordered.

Belongs to the periplasmic pilus chaperone family.

The protein localises to the periplasm. In terms of biological role, involved in the biogenesis of the NFA-I adhesin. In Escherichia coli, this protein is Chaperone protein NfaE (nfaE).